Consider the following 158-residue polypeptide: SsrA-binding protein (158 aa).

This sequence belongs to the SmpB family.

Its subcellular location is the cytoplasm. Its function is as follows. Required for rescue of stalled ribosomes mediated by trans-translation. Binds to transfer-messenger RNA (tmRNA), required for stable association of tmRNA with ribosomes. tmRNA and SmpB together mimic tRNA shape, replacing the anticodon stem-loop with SmpB. tmRNA is encoded by the ssrA gene; the 2 termini fold to resemble tRNA(Ala) and it encodes a 'tag peptide', a short internal open reading frame. During trans-translation Ala-aminoacylated tmRNA acts like a tRNA, entering the A-site of stalled ribosomes, displacing the stalled mRNA. The ribosome then switches to translate the ORF on the tmRNA; the nascent peptide is terminated with the 'tag peptide' encoded by the tmRNA and targeted for degradation. The ribosome is freed to recommence translation, which seems to be the essential function of trans-translation. The sequence is that of SsrA-binding protein from Caldicellulosiruptor bescii (strain ATCC BAA-1888 / DSM 6725 / KCTC 15123 / Z-1320) (Anaerocellum thermophilum).